The chain runs to 266 residues: Small ribosomal subunit protein mS42 (266 aa).

Belongs to the mitochondrion-specific ribosomal protein mS42 family. Component of the mitochondrial small ribosomal subunit (mt-SSU). Mature yeast 74S mitochondrial ribosomes consist of a small (37S) and a large (54S) subunit. The 37S small subunit contains a 15S ribosomal RNA (15S mt-rRNA) and 34 different proteins. The 54S large subunit contains a 21S rRNA (21S mt-rRNA) and 46 different proteins. mS42 forms a heterodimer with mS43, building a large protuberance adjacent to the mRNA channel exit in the mt-SSU body.

It is found in the mitochondrion. Component of the mitochondrial ribosome (mitoribosome), a dedicated translation machinery responsible for the synthesis of mitochondrial genome-encoded proteins, including at least some of the essential transmembrane subunits of the mitochondrial respiratory chain. The mitoribosomes are attached to the mitochondrial inner membrane and translation products are cotranslationally integrated into the membrane. In Saccharomyces cerevisiae (strain ATCC 204508 / S288c) (Baker's yeast), this protein is Small ribosomal subunit protein mS42 (RSM26).